A 127-amino-acid chain; its full sequence is Membrane-bound lysozyme inhibitor of C-type lysozyme (127 aa).

Positions 1 to 18 are cleaved as a signal peptide; it reads MKKALWLLLAAVPVVLVA. The N-palmitoyl cysteine moiety is linked to residue C19. C19 is lipidated: S-diacylglycerol cysteine. A disulfide bridge links C51 with C124.

This sequence belongs to the MliC family. Type 2 subfamily. As to quaternary structure, homodimer.

It is found in the cell outer membrane. Its function is as follows. Specifically inhibits C-type lysozymes. The chain is Membrane-bound lysozyme inhibitor of C-type lysozyme from Pseudomonas aeruginosa (strain ATCC 15692 / DSM 22644 / CIP 104116 / JCM 14847 / LMG 12228 / 1C / PRS 101 / PAO1).